Reading from the N-terminus, the 364-residue chain is Thymidine kinase (364 aa).

Residue 36–43 (GPFGVGKT) coordinates ATP. Glutamate 64 functions as the Proton acceptor in the catalytic mechanism. Glutamine 108 contacts substrate. Arginine 201 contributes to the ATP binding site. Arginine 207 is a binding site for substrate.

This sequence belongs to the herpesviridae thymidine kinase family. In terms of assembly, homodimer.

The catalysed reaction is thymidine + ATP = dTMP + ADP + H(+). Catalyzes the transfer of the gamma-phospho group of ATP to thymidine to generate dTMP in the salvage pathway of pyrimidine synthesis. The dTMP serves as a substrate for DNA polymerase during viral DNA replication. Allows the virus to be reactivated and to grow in non-proliferative cells lacking a high concentration of phosphorylated nucleic acid precursors. This is Thymidine kinase from Infectious laryngotracheitis virus (strain Thorne V882) (ILTV).